Reading from the N-terminus, the 235-residue chain is Leucyl/phenylalanyl-tRNA--protein transferase (235 aa).

The protein belongs to the L/F-transferase family.

The protein resides in the cytoplasm. It catalyses the reaction N-terminal L-lysyl-[protein] + L-leucyl-tRNA(Leu) = N-terminal L-leucyl-L-lysyl-[protein] + tRNA(Leu) + H(+). The enzyme catalyses N-terminal L-arginyl-[protein] + L-leucyl-tRNA(Leu) = N-terminal L-leucyl-L-arginyl-[protein] + tRNA(Leu) + H(+). The catalysed reaction is L-phenylalanyl-tRNA(Phe) + an N-terminal L-alpha-aminoacyl-[protein] = an N-terminal L-phenylalanyl-L-alpha-aminoacyl-[protein] + tRNA(Phe). Functions in the N-end rule pathway of protein degradation where it conjugates Leu, Phe and, less efficiently, Met from aminoacyl-tRNAs to the N-termini of proteins containing an N-terminal arginine or lysine. In Aeromonas hydrophila subsp. hydrophila (strain ATCC 7966 / DSM 30187 / BCRC 13018 / CCUG 14551 / JCM 1027 / KCTC 2358 / NCIMB 9240 / NCTC 8049), this protein is Leucyl/phenylalanyl-tRNA--protein transferase.